Reading from the N-terminus, the 407-residue chain is Aminoacylase-1 (407 aa).

Residue alanine 2 is modified to N-acetylalanine. Histidine 80 is a binding site for Zn(2+). The active site involves aspartate 82. A Zn(2+)-binding site is contributed by aspartate 113. The Proton acceptor role is filled by glutamate 147. Glutamate 148, glutamate 175, and histidine 372 together coordinate Zn(2+).

It belongs to the peptidase M20A family. Homodimer. Interacts with SPHK1. It depends on Zn(2+) as a cofactor.

The protein localises to the cytoplasm. The catalysed reaction is an N-acyl-L-amino acid + H2O = an L-alpha-amino acid + a carboxylate. It catalyses the reaction N-acetyl-L-methionine + H2O = L-methionine + acetate. The enzyme catalyses N-acetyl-L-glutamine + H2O = L-glutamine + acetate. In terms of biological role, catalyzes the hydrolysis of N-acetylated amino acids to acetate and free amino acids. The protein is Aminoacylase-1 (ACY1) of Sus scrofa (Pig).